The sequence spans 135 residues: Allatotropins (135 aa).

A signal peptide spans 1–22; the sequence is MNFSMHLVLAVAAAACLCVVTA. At Phe-51 the chain carries Phenylalanine amide. A propeptide spanning residues 55–135 is cleaved from the precursor; the sequence is DRPHTRAELY…SSEELLRNVA (81 aa).

Allatotropin: Expressed in corpora cardiaca (CC), corpora allata (CA), antennal lobe (AL) and gnathal ganglion (GNG) (protein level). Expression in AL detected in all animals, expression in GNG detected in most animals and expression in CA and CC detected in few animals (at protein level). Allatotropin-PP-1: Expressed in corpora cardiaca (CC), corpora allata (CA), antennal lobe (AL) and gnathal ganglion (GNG) (at protein level). Expression in AL detected in all animals and expression in GNG, CA and CC detected in some animals (at protein level).

The protein resides in the secreted. In terms of biological role, neuropeptide stimulator of juvenile hormone synthesis. The protein is Allatotropins of Agrotis ipsilon (Black cutworm moth).